The following is a 191-amino-acid chain: MAQLFFRYGSMNSGKTIEILKVAHNYEEQNKTVAIFTSGIDDRDQVGFISSRIGLKREATPIFSDTNIFEIVANIKPKPNCVLLDESQFLEKEHVFQLAKIVDDLNIPVIAYGLKNDFRNELFEGSKYLLLYADKLEEMKTICWFCAKKATMVLRVDDKGKPVYTGEQIMIGGNDHYYPVCRKCHANPPIK.

ATP contacts are provided by residues 9-16 (GSMNSGKT) and 85-88 (DESQ). Glu-86 serves as the catalytic Proton acceptor. Residues Cys-143, Cys-146, Cys-181, and Cys-184 each contribute to the Zn(2+) site.

This sequence belongs to the thymidine kinase family. As to quaternary structure, homotetramer.

The protein resides in the cytoplasm. It carries out the reaction thymidine + ATP = dTMP + ADP + H(+). The polypeptide is Thymidine kinase (Listeria innocua serovar 6a (strain ATCC BAA-680 / CLIP 11262)).